We begin with the raw amino-acid sequence, 300 residues long: N-acetylmannosamine kinase (300 aa).

Residues 5-12 (ALDIGGTK) and 132-139 (GVGGGIVL) contribute to the ATP site. Positions 156, 166, 168, and 173 each coordinate Zn(2+).

It belongs to the ROK (NagC/XylR) family. NanK subfamily. In terms of assembly, homodimer.

It catalyses the reaction an N-acyl-D-mannosamine + ATP = an N-acyl-D-mannosamine 6-phosphate + ADP + H(+). It functions in the pathway amino-sugar metabolism; N-acetylneuraminate degradation; D-fructose 6-phosphate from N-acetylneuraminate: step 2/5. In terms of biological role, catalyzes the phosphorylation of N-acetylmannosamine (ManNAc) to ManNAc-6-P. The sequence is that of N-acetylmannosamine kinase from Haemophilus influenzae (strain PittEE).